Consider the following 492-residue polypeptide: Phosphatidylglycerol--prolipoprotein diacylglyceryl transferase (492 aa).

Helical transmembrane passes span 40-60, 72-92, 106-126, 133-153, 184-204, 214-234, 361-381, 409-429, and 441-461; these read IFGIGWALLFLLIAVLAYVGW, AIRQIAGFAVMAAVILVVVVP, VAVRGYGMFLMLAAIASVGLA, AGLGADSILQLAPWTFIGGLL, QGGLVVYGGFIGGFIASLIAL, IGDVIIPCVFVGLLFGRLGCL, VWGTQIISSVFAAIMFVVLLI, GVLMLVGFIAYGVLRIVLEWI, and LSISQWVSLVVIAASLVTLFI. Residue Arg-230 participates in a 1,2-diacyl-sn-glycero-3-phospho-(1'-sn-glycerol) binding.

Belongs to the Lgt family.

It is found in the cell inner membrane. It carries out the reaction L-cysteinyl-[prolipoprotein] + a 1,2-diacyl-sn-glycero-3-phospho-(1'-sn-glycerol) = an S-1,2-diacyl-sn-glyceryl-L-cysteinyl-[prolipoprotein] + sn-glycerol 1-phosphate + H(+). It functions in the pathway protein modification; lipoprotein biosynthesis (diacylglyceryl transfer). Functionally, catalyzes the transfer of the diacylglyceryl group from phosphatidylglycerol to the sulfhydryl group of the N-terminal cysteine of a prolipoprotein, the first step in the formation of mature lipoproteins. The protein is Phosphatidylglycerol--prolipoprotein diacylglyceryl transferase of Rhodopirellula baltica (strain DSM 10527 / NCIMB 13988 / SH1).